The primary structure comprises 732 residues: Ubiquitin carboxyl-terminal hydrolase 21 (732 aa).

Pro residues predominate over residues 1–10 (MAEFSDPPPS). The interval 1–111 (MAEFSDPPPS…ISPVSNNNHL (111 aa)) is disordered. Composition is skewed to polar residues over residues 11-31 (NLSSSHKLTKPNQTLDESSPT) and 38-53 (VTNSLSLSSPIRQIQA). The segment covering 55–69 (SPAKPDGSSSSPPDK) has biased composition (low complexity). The 307-residue stretch at 163–469 (AGLYNSGNTC…PAYILFYARE (307 aa)) folds into the USP domain. The Nucleophile role is filled by C172. The Proton acceptor role is filled by H428. Positions 534 to 732 (KEEVFHSAES…SSNMRRSIKL (199 aa)) are disordered. Low complexity predominate over residues 540-551 (SAESSNNEDSSA). Basic and acidic residues predominate over residues 583–609 (AYIDKSEKPFAETSQPKEPKPFADRAS). A compositionally biased stretch (basic residues) spans 719–732 (KKKKSSNMRRSIKL).

The protein belongs to the peptidase C19 family.

It carries out the reaction Thiol-dependent hydrolysis of ester, thioester, amide, peptide and isopeptide bonds formed by the C-terminal Gly of ubiquitin (a 76-residue protein attached to proteins as an intracellular targeting signal).. In terms of biological role, recognizes and hydrolyzes the peptide bond at the C-terminal Gly of ubiquitin. Involved in the processing of poly-ubiquitin precursors as well as that of ubiquitinated proteins. This chain is Ubiquitin carboxyl-terminal hydrolase 21 (UBP21), found in Arabidopsis thaliana (Mouse-ear cress).